The chain runs to 313 residues: Tyrosine recombinase XerC (313 aa).

Residues 11-97 (NSLQKPLERF…SLRSFFDFLI (87 aa)) enclose the Core-binding (CB) domain. Residues 118-298 (PLPKNLDVDE…DFQHLAQAYD (181 aa)) form the Tyr recombinase domain. Residues Arg157, Lys181, His250, Arg253, and His276 contribute to the active site. Residue Tyr285 is the O-(3'-phospho-DNA)-tyrosine intermediate of the active site.

It belongs to the 'phage' integrase family. XerC subfamily. In terms of assembly, forms a cyclic heterotetrameric complex composed of two molecules of XerC and two molecules of XerD.

Its subcellular location is the cytoplasm. In terms of biological role, site-specific tyrosine recombinase, which acts by catalyzing the cutting and rejoining of the recombining DNA molecules. The XerC-XerD complex is essential to convert dimers of the bacterial chromosome into monomers to permit their segregation at cell division. It also contributes to the segregational stability of plasmids. The polypeptide is Tyrosine recombinase XerC (Vibrio campbellii (strain ATCC BAA-1116)).